The primary structure comprises 125 residues: Phosphoribosyl-AMP cyclohydrolase (125 aa).

Asp74 provides a ligand contact to Mg(2+). Cys75 contributes to the Zn(2+) binding site. The Mg(2+) site is built by Asp76 and Asp78. Cys92 and Cys99 together coordinate Zn(2+).

Belongs to the PRA-CH family. Homodimer. The cofactor is Mg(2+). Zn(2+) serves as cofactor.

It is found in the cytoplasm. It catalyses the reaction 1-(5-phospho-beta-D-ribosyl)-5'-AMP + H2O = 1-(5-phospho-beta-D-ribosyl)-5-[(5-phospho-beta-D-ribosylamino)methylideneamino]imidazole-4-carboxamide. It participates in amino-acid biosynthesis; L-histidine biosynthesis; L-histidine from 5-phospho-alpha-D-ribose 1-diphosphate: step 3/9. Functionally, catalyzes the hydrolysis of the adenine ring of phosphoribosyl-AMP. In Syntrophotalea carbinolica (strain DSM 2380 / NBRC 103641 / GraBd1) (Pelobacter carbinolicus), this protein is Phosphoribosyl-AMP cyclohydrolase.